The chain runs to 425 residues: MRVKLCGAAGGRLGTLAGLGRSGAAALALPGCLLYTRTGTAPHLTLDTLREVSGVPPVAQLTLPAMAELHDVLAEYKEGAAKFIGMPDTVLYCSLQDPVAPCPSGYNTNKTVSLWSSSGRMEMTASKFMDIQRAIQPDWFQCIADGDTISGEVTRKRAKKSVDRSLSFLDACLQLLEKTPELQGSVMFGTIEGGDVLEERLRSARETAKRPVGGFLLDGFQGRAMAKETKMNLISSVTAELPEDKPRIIHGVGKPDEVLECIERGVDIFESFFPFQVTERGCALVFGYDYLSDPKAEAALKQNGAQDLEKNSPEEDQEEEVVKADPEMTPFEIFLKEKRYHDDFRPLLEGCTCYCCQRHTRAYLHHLLVSSELLAGVLLMMHNFQHYFSFFSAIRDALRDDKLDQLKKLIFRQALQGPENAKIDQ.

Positions 302-323 (QNGAQDLEKNSPEEDQEEEVVK) are disordered. The Zn(2+) site is built by C351, C353, C356, and H382.

This sequence belongs to the queuine tRNA-ribosyltransferase family. QTRT2 subfamily. As to quaternary structure, heterodimer of a catalytic subunit QTRT1 and an accessory subunit QTRT2. The cofactor is Zn(2+).

It localises to the cytoplasm. Its subcellular location is the mitochondrion outer membrane. Its function is as follows. Non-catalytic subunit of the queuine tRNA-ribosyltransferase (TGT) that catalyzes the base-exchange of a guanine (G) residue with queuine (Q) at position 34 (anticodon wobble position) in tRNAs with GU(N) anticodons (tRNA-Asp, -Asn, -His and -Tyr), resulting in the hypermodified nucleoside queuosine (7-(((4,5-cis-dihydroxy-2-cyclopenten-1-yl)amino)methyl)-7-deazaguanosine). In Gallus gallus (Chicken), this protein is Queuine tRNA-ribosyltransferase accessory subunit 2.